Consider the following 71-residue polypeptide: Large ribosomal subunit protein uL29 (71 aa).

It belongs to the universal ribosomal protein uL29 family.

The chain is Large ribosomal subunit protein uL29 from Rickettsia massiliae (strain Mtu5).